The chain runs to 1144 residues: Type II inositol polyphosphate 5-phosphatase 14 (1144 aa).

Disordered stretches follow at residues 15 to 67 (ASLV…FDSS) and 81 to 118 (GRTSGERGNGEECGFVTPPSKPASQGGGNDGGREDDIE). 5 WD repeats span residues 158–196 (ETQTGKFLRNIACTESQLWAGQENGVRFWNLEEAYEVGC), 216–255 (VPTSPALCLLVDHGNRLVWTGHKDGKIRAWKMNQPNTTTA), 269–307 (AHRGPVNYIVISSYGDMWSCSDGGVIKIWTLDSLEKSLV), 445–483 (EDTRKVEAIAIAADGSIWTGSMNGVIAQWDGNGSRLREV), and 524–561 (SHNEPVIKLAAGGGFIFSLATHGGVRGWYVTSPGPLDS). 2 catalytic regions span residues 791-807 (DLVAFFGDFNYRLFGIT) and 870-885 (KKRIPAWCDRVIYRDN). Residue lysine 949 forms a Glycyl lysine isopeptide (Lys-Gly) (interchain with G-Cter in ubiquitin) linkage. Over residues 1111 to 1131 (TTMTKNLEGSTRYQTDANRGG) the composition is skewed to polar residues. Residues 1111 to 1144 (TTMTKNLEGSTRYQTDANRGGSTRHRTDDSTRRG) form a disordered region. Basic and acidic residues predominate over residues 1135-1144 (HRTDDSTRRG).

The protein belongs to the inositol polyphosphate 5-phosphatase family. It depends on Mg(2+) as a cofactor. Expressed in young seedlings and flowers.

It carries out the reaction a 1,2-diacyl-sn-glycero-3-phospho-(1D-myo-inositol-4,5-bisphosphate) + H2O = a 1,2-diacyl-sn-glycero-3-phospho-(1D-myo-inositol 4-phosphate) + phosphate. The enzyme catalyses a 1,2-diacyl-sn-glycero-3-phospho-(1D-myo-inositol-3,4,5-trisphosphate) + H2O = a 1,2-diacyl-sn-glycero-3-phospho-(1D-myo-inositol-3,4-bisphosphate) + phosphate. It catalyses the reaction 1D-myo-inositol 1,4,5-trisphosphate + H2O = 1D-myo-inositol 1,4-bisphosphate + phosphate. Functionally, has phosphatase activity toward PtdIns(4,5)P2, PtdIns(3,4,5)P3 and Ins(1,4,5)P3. This chain is Type II inositol polyphosphate 5-phosphatase 14, found in Arabidopsis thaliana (Mouse-ear cress).